Consider the following 856-residue polypeptide: Nuclear valosin-containing protein-like (856 aa).

The tract at residues Met-1 to Lys-220 is interaction with RPL5. Residues Arg-49–Arg-52 carry the Nucleolar localization signal motif. Residue Lys-70 is modified to N6-acetyllysine. The tract at residues Ala-84–Ile-175 is disordered. A Nuclear localization signal motif is present at residues Lys-85 to Arg-88. Residues Glu-92 to Pro-111 are compositionally biased toward acidic residues. 2 stretches are compositionally biased toward polar residues: residues Gln-114–Leu-124 and Asp-133–Gly-158. Residue Ser-134 is modified to Phosphoserine. The residue at position 138 (Thr-138) is a Phosphothreonine. Lys-156 bears the N6-acetyllysine mark. Ser-191 carries the post-translational modification Phosphoserine. The disordered stretch occupies residues Pro-197–Gln-236. A compositionally biased stretch (basic and acidic residues) spans Gln-205–Lys-218. Lys-208 participates in a covalent cross-link: Glycyl lysine isopeptide (Lys-Gly) (interchain with G-Cter in SUMO2). Phosphoserine occurs at positions 211 and 215. Positions Lys-218–Lys-232 match the Nuclear localization signal motif. The segment covering Arg-219–Arg-230 has biased composition (basic residues). The interval Val-267–Leu-474 is interaction with WDR74. Gly-305 to Thr-312 contributes to the ATP binding site. The interval Gln-496–Glu-523 is disordered. Gly-622–Thr-629 is a binding site for ATP.

This sequence belongs to the AAA ATPase family. In terms of assembly, interacts with NCL/nucleolin. Isoform 1 and isoform 2 interact with TERT and isoform 1 exhibits a higher binding affinity for TERT compared to isoform 2. Isoform 1 interacts with MTREX in an ATP-dependent manner; the interaction is required to associate NVL with nuclear RNA exosome. Isoform 1 interacts with RPL5 in an ATP-dependent manner. Interacts with WDR74 (through WDR repeats); the interaction is independent of RNA or pre-60S ribosome particles. As to expression, widely expressed. Highest level of expression in heart, placenta, skeletal muscle, pancreas and retina.

It localises to the nucleus. The protein resides in the nucleoplasm. The protein localises to the nucleolus. Its function is as follows. Participates in the assembly of the telomerase holoenzyme and effecting of telomerase activity via its interaction with TERT. Involved in both early and late stages of the pre-rRNA processing pathways. Spatiotemporally regulates 60S ribosomal subunit biogenesis in the nucleolus. Catalyzes the release of specific assembly factors, such as WDR74, from pre-60S ribosomal particles through the ATPase activity. This Homo sapiens (Human) protein is Nuclear valosin-containing protein-like.